A 1231-amino-acid chain; its full sequence is Multifunctional 2-oxoglutarate metabolism enzyme (1231 aa).

Residues 1–41 (MANISSPFGQNEWLVEAMYRKFRDDPSSVDPSWHEFLVDYS) are 2-oxoglutarate dehydrogenase E1, N-terminal part. The segment covering 24–37 (DDPSSVDPSWHEFL) has biased composition (basic and acidic residues). The interval 24–56 (DDPSSVDPSWHEFLVDYSPEPTSQPAAEPTRVT) is disordered. The interval 42 to 88 (PEPTSQPAAEPTRVTSPLVAERAAAAAPQAPPKPADTAAAGNGVVAA) is linker. Residues 89–337 (LAAKTAVPPP…LRTIHELLLS (249 aa)) form a succinyltransferase E2 region. His316 serves as the catalytic Proton acceptor; for succinyltransferase activity. Positions 338 to 1231 (DGFWDEVFRE…QQEILDEAFG (894 aa)) are 2-oxoglutarate dehydrogenase E1, C-terminal part. Position 542 (Arg542) interacts with thiamine diphosphate. Residues His581 and Ser606 each coordinate 2-oxoglutarate. 6 residues coordinate thiamine diphosphate: Ser606, Leu608, Asp649, Ala650, Ala651, and Asn682. Asp649 provides a ligand contact to Mg(2+). The Mg(2+) site is built by Asn682 and Ile684. Residues 787–817 (DISMKEAEDALRDYQGQLERVFNEVRELEKH) are a coiled coil. A 2-oxoglutarate-binding site is contributed by His1024. Acetyl-CoA is bound by residues Thr1042, Arg1058, Lys1093, Ser1096, Gln1146, Arg1153, and Arg1154.

This sequence belongs to the 2-oxoacid dehydrogenase family. Kgd subfamily. Homodimer. The 2-oxoglutarate dehydrogenase (ODH) complex contains multiple copies of three enzymatic components: 2-oxoglutarate dehydrogenase (E1), dihydrolipoamide succinyltransferase (E2) and lipoamide dehydrogenase (E3). Mg(2+) serves as cofactor. Requires thiamine diphosphate as cofactor.

It carries out the reaction glyoxylate + 2-oxoglutarate + H(+) = 2-hydroxy-3-oxoadipate + CO2. It catalyses the reaction 2-oxoglutarate + H(+) = succinate semialdehyde + CO2. The enzyme catalyses N(6)-[(R)-lipoyl]-L-lysyl-[protein] + 2-oxoglutarate + H(+) = N(6)-[(R)-S(8)-succinyldihydrolipoyl]-L-lysyl-[protein] + CO2. The catalysed reaction is N(6)-[(R)-dihydrolipoyl]-L-lysyl-[protein] + succinyl-CoA = N(6)-[(R)-S(8)-succinyldihydrolipoyl]-L-lysyl-[protein] + CoA. It participates in carbohydrate metabolism; tricarboxylic acid cycle; succinate from 2-oxoglutarate (transferase route): step 1/2. Its pathway is carbohydrate metabolism; tricarboxylic acid cycle; succinyl-CoA from 2-oxoglutarate (dehydrogenase route): step 1/1. Alpha-ketoglutarate dehydrogenase and decarboxylase activities are inhibited by unphosphorylated GarA, and allosterically activated by acetyl-CoA, the main substrate of the TCA cycle. Its function is as follows. Shows three enzymatic activities that share a first common step, the attack of thiamine-PP on 2-oxoglutarate (alpha-ketoglutarate, KG), leading to the formation of an enamine-thiamine-PP intermediate upon decarboxylation. Thus, displays KGD activity, catalyzing the decarboxylation from five-carbon 2-oxoglutarate to four-carbon succinate semialdehyde (SSA). Also catalyzes C-C bond formation between the activated aldehyde formed after decarboxylation of alpha-ketoglutarate and the carbonyl of glyoxylate (GLX), to yield 2-hydroxy-3-oxoadipate (HOA), which spontaneously decarboxylates to form 5-hydroxylevulinate (HLA). And is also a component of the 2-oxoglutarate dehydrogenase (ODH) complex, that catalyzes the overall conversion of 2-oxoglutarate to succinyl-CoA and CO(2). The KG decarboxylase and KG dehydrogenase reactions provide two alternative, tightly regulated, pathways connecting the oxidative and reductive branches of the TCA cycle. This is Multifunctional 2-oxoglutarate metabolism enzyme (kgd) from Mycobacterium bovis (strain ATCC BAA-935 / AF2122/97).